We begin with the raw amino-acid sequence, 212 residues long: uncharacterized protein (212 aa).

The Acyl-thioester intermediate role is filled by Cys-52. Catalysis depends on residues His-89 and Asp-104.

Belongs to the arylamine N-acetyltransferase family.

This is an uncharacterized protein from Acanthamoeba polyphaga (Amoeba).